The sequence spans 173 residues: Crossover junction endodeoxyribonuclease RuvC (173 aa).

Active-site residues include aspartate 10, glutamate 71, and aspartate 143. Residues aspartate 10, glutamate 71, and aspartate 143 each coordinate Mg(2+).

It belongs to the RuvC family. In terms of assembly, homodimer which binds Holliday junction (HJ) DNA. The HJ becomes 2-fold symmetrical on binding to RuvC with unstacked arms; it has a different conformation from HJ DNA in complex with RuvA. In the full resolvosome a probable DNA-RuvA(4)-RuvB(12)-RuvC(2) complex forms which resolves the HJ. Requires Mg(2+) as cofactor.

Its subcellular location is the cytoplasm. It carries out the reaction Endonucleolytic cleavage at a junction such as a reciprocal single-stranded crossover between two homologous DNA duplexes (Holliday junction).. Functionally, the RuvA-RuvB-RuvC complex processes Holliday junction (HJ) DNA during genetic recombination and DNA repair. Endonuclease that resolves HJ intermediates. Cleaves cruciform DNA by making single-stranded nicks across the HJ at symmetrical positions within the homologous arms, yielding a 5'-phosphate and a 3'-hydroxyl group; requires a central core of homology in the junction. The consensus cleavage sequence is 5'-(A/T)TT(C/G)-3'. Cleavage occurs on the 3'-side of the TT dinucleotide at the point of strand exchange. HJ branch migration catalyzed by RuvA-RuvB allows RuvC to scan DNA until it finds its consensus sequence, where it cleaves and resolves the cruciform DNA. This is Crossover junction endodeoxyribonuclease RuvC from Gloeobacter violaceus (strain ATCC 29082 / PCC 7421).